A 336-amino-acid polypeptide reads, in one-letter code: Dihydroorotate dehydrogenase (quinone) (336 aa).

FMN-binding positions include alanine 62–lysine 66 and threonine 86. Lysine 66 contributes to the substrate binding site. Substrate is bound at residue asparagine 111–phenylalanine 115. FMN is bound by residues asparagine 139 and asparagine 172. Asparagine 172 contributes to the substrate binding site. Residue serine 175 is the Nucleophile of the active site. Residue asparagine 177 participates in substrate binding. Positions 217 and 245 each coordinate FMN. Position 246-247 (asparagine 246–threonine 247) interacts with substrate. FMN-binding positions include glycine 268, glycine 297, and tyrosine 318 to serine 319.

Belongs to the dihydroorotate dehydrogenase family. Type 2 subfamily. As to quaternary structure, monomer. FMN is required as a cofactor.

Its subcellular location is the cell membrane. It catalyses the reaction (S)-dihydroorotate + a quinone = orotate + a quinol. It participates in pyrimidine metabolism; UMP biosynthesis via de novo pathway; orotate from (S)-dihydroorotate (quinone route): step 1/1. In terms of biological role, catalyzes the conversion of dihydroorotate to orotate with quinone as electron acceptor. In Enterobacter sp. (strain 638), this protein is Dihydroorotate dehydrogenase (quinone).